We begin with the raw amino-acid sequence, 94 residues long: Co-chaperonin GroES (94 aa).

The protein belongs to the GroES chaperonin family. Heptamer of 7 subunits arranged in a ring. Interacts with the chaperonin GroEL.

It is found in the cytoplasm. Its function is as follows. Together with the chaperonin GroEL, plays an essential role in assisting protein folding. The GroEL-GroES system forms a nano-cage that allows encapsulation of the non-native substrate proteins and provides a physical environment optimized to promote and accelerate protein folding. GroES binds to the apical surface of the GroEL ring, thereby capping the opening of the GroEL channel. In Lactobacillus delbrueckii subsp. bulgaricus (strain ATCC BAA-365 / Lb-18), this protein is Co-chaperonin GroES.